The chain runs to 273 residues: Formamidopyrimidine-DNA glycosylase (273 aa).

Proline 2 (schiff-base intermediate with DNA) is an active-site residue. The active-site Proton donor is glutamate 3. Lysine 59 functions as the Proton donor; for beta-elimination activity in the catalytic mechanism. Positions 92 and 111 each coordinate DNA. The segment at lysine 239–lysine 273 adopts an FPG-type zinc-finger fold. The active-site Proton donor; for delta-elimination activity is the arginine 263.

It belongs to the FPG family. As to quaternary structure, monomer. It depends on Zn(2+) as a cofactor.

It carries out the reaction Hydrolysis of DNA containing ring-opened 7-methylguanine residues, releasing 2,6-diamino-4-hydroxy-5-(N-methyl)formamidopyrimidine.. It catalyses the reaction 2'-deoxyribonucleotide-(2'-deoxyribose 5'-phosphate)-2'-deoxyribonucleotide-DNA = a 3'-end 2'-deoxyribonucleotide-(2,3-dehydro-2,3-deoxyribose 5'-phosphate)-DNA + a 5'-end 5'-phospho-2'-deoxyribonucleoside-DNA + H(+). Functionally, involved in base excision repair of DNA damaged by oxidation or by mutagenic agents. Acts as a DNA glycosylase that recognizes and removes damaged bases. Has a preference for oxidized purines, such as 7,8-dihydro-8-oxoguanine (8-oxoG). Has AP (apurinic/apyrimidinic) lyase activity and introduces nicks in the DNA strand. Cleaves the DNA backbone by beta-delta elimination to generate a single-strand break at the site of the removed base with both 3'- and 5'-phosphates. This is Formamidopyrimidine-DNA glycosylase from Listeria monocytogenes serovar 1/2a (strain ATCC BAA-679 / EGD-e).